The chain runs to 444 residues: Type VII secretion system protein EssB (444 aa).

The Cytoplasmic segment spans residues 1–229 (MVKNHNPKNE…RKVGHTVFKW (229 aa)). Residues 230-250 (VAIGMTTLSVLLIAFLAFLYF) form a helical membrane-spanning segment. The Extracellular portion of the chain corresponds to 251-444 (SVMKHNERIE…EKRQEAERKK (194 aa)). Residues 366 to 444 (KNNGDLSNDK…EKRQEAERKK (79 aa)) form a disordered region. Residues 372 to 444 (SNDKRSEETK…EKRQEAERKK (73 aa)) show a composition bias toward basic and acidic residues. The stretch at 387-443 (LQDILDKEKQVKDEKAKSEEEKAKAKDEKLKQQEENEKKQKEQAQKDKEKRQEAERK) forms a coiled coil.

The protein belongs to the EssB family. In terms of assembly, may oligomerize and interact with other membrane components to form the Ess system. Interacts with EsaA.

Its subcellular location is the cell membrane. Component of the type VII secretion system (Ess). Required for the secretion of EsxA and proper accumulation of EssB and EssD. In Staphylococcus aureus (strain USA300), this protein is Type VII secretion system protein EssB.